An 85-amino-acid chain; its full sequence is Large ribosomal subunit protein bL27 (85 aa).

Positions 1 to 20 (MAHKKAGGSTRNGRDSEAKR) are disordered.

The protein belongs to the bacterial ribosomal protein bL27 family.

This is Large ribosomal subunit protein bL27 from Enterobacter sp. (strain 638).